Here is a 202-residue protein sequence, read N- to C-terminus: Probable molybdenum cofactor guanylyltransferase (202 aa).

GTP contacts are provided by residues 9-11 (VAG), Lys-22, Asn-50, Asp-77, and Asp-102. Residue Asp-102 participates in Mg(2+) binding.

Belongs to the MobA family. Requires Mg(2+) as cofactor.

It is found in the cytoplasm. It carries out the reaction Mo-molybdopterin + GTP + H(+) = Mo-molybdopterin guanine dinucleotide + diphosphate. Functionally, transfers a GMP moiety from GTP to Mo-molybdopterin (Mo-MPT) cofactor (Moco or molybdenum cofactor) to form Mo-molybdopterin guanine dinucleotide (Mo-MGD) cofactor. The sequence is that of Probable molybdenum cofactor guanylyltransferase from Natronomonas pharaonis (strain ATCC 35678 / DSM 2160 / CIP 103997 / JCM 8858 / NBRC 14720 / NCIMB 2260 / Gabara) (Halobacterium pharaonis).